Consider the following 424-residue polypeptide: MVAIDLPYDKRTITAQIDDENYAGKLVSQAATYHNKLSEQETVEKSLDNPIGSDKLEELARGKHNIVIISSDHTRPVPSHIITPILLRRLRSVAPDARIRILVATGFHRPSTHEELVNKYGEDIVNNEEIVMHVSTDDSSMVKIGQLPSGGDCIINKVAAEADLLISEGFIESHFFAGFSGGRKSVLPGIASYKTIMANHSGEFINSPKARTGNLMHNSIHKDMVYAARTAKLAFIINVVLDEDKKIIGSFAGDMEAAHKVGCDFVKELSSVPAIDCDIAISTNGGYPLDQNIYQAVKGMTAAEATNKEGGTIIMVAGARDGHGGEGFYHNLADVDDPKEFLDQAINTPRLKTIPDQWTAQIFARILVHHHVIFVSDLVDPDLITNMHMELAKTLDEAMEKAYAREGQAAKVTVIPDGLGVIVK.

Residue 72–75 (DHTR) participates in Ni(II)-pyridinium-3,5-bisthiocarboxylate mononucleotide binding. Active-site proton donor/acceptor residues include His-108 and His-174. Ni(II)-pyridinium-3,5-bisthiocarboxylate mononucleotide-binding residues include Lys-184 and His-200. Gln-295 and Lys-298 together coordinate substrate.

It belongs to the lactate racemase family. As to quaternary structure, homodimer. The cofactor is Ni(II)-pyridinium-3,5-bisthiocarboxylate mononucleotide.

The enzyme catalyses (S)-lactate = (R)-lactate. With respect to regulation, activation of the apo-enzyme requires the three accessory proteins LarB, LarE and LarC, that are involved in the biosynthesis of the nickel-pincer cofactor of LarA. Inhibited by sulfite that behaves as a mixed inhibitor. In terms of biological role, catalyzes the interconversion between the D- and L-isomers of lactate. May act as a rescue enzyme to ensure D-lactate production in physiological conditions where its production by the D-lactate dehydrogenase LdhD is not sufficient. D-Lactate is absolutely required for growth of L.plantarum and is an essential component of the cell wall peptidoglycan in this species, where it is incorporated as the last residue of the muramoyl-pentadepsipeptide peptidoglycan precursor; its incorporation confers high level of vancomycin resistance. The sequence is that of Lactate racemase from Lactiplantibacillus plantarum (strain ATCC BAA-793 / NCIMB 8826 / WCFS1) (Lactobacillus plantarum).